The sequence spans 218 residues: Hypoxanthine-guanine phosphoribosyltransferase (218 aa).

Ala-2 carries the N-acetylalanine modification. Residue Lys-69 coordinates GMP. Lys-103 is subject to N6-acetyllysine. Lys-115 participates in a covalent cross-link: Glycyl lysine isopeptide (Lys-Gly) (interchain with G-Cter in SUMO1); alternate. Lys-115 participates in a covalent cross-link: Glycyl lysine isopeptide (Lys-Gly) (interchain with G-Cter in SUMO2); alternate. GMP is bound by residues 134-142 (EDIIDTGKT), Lys-166, 186-188 (KFV), and Asp-194. Asp-138 acts as the Proton acceptor in catalysis. Thr-142 bears the Phosphothreonine mark. Mg(2+) is bound at residue Asp-194.

Belongs to the purine/pyrimidine phosphoribosyltransferase family. Homotetramer. Requires Mg(2+) as cofactor.

Its subcellular location is the cytoplasm. It carries out the reaction IMP + diphosphate = hypoxanthine + 5-phospho-alpha-D-ribose 1-diphosphate. The catalysed reaction is GMP + diphosphate = guanine + 5-phospho-alpha-D-ribose 1-diphosphate. It functions in the pathway purine metabolism; IMP biosynthesis via salvage pathway; IMP from hypoxanthine: step 1/1. Its function is as follows. Converts guanine to guanosine monophosphate, and hypoxanthine to inosine monophosphate. Transfers the 5-phosphoribosyl group from 5-phosphoribosylpyrophosphate onto the purine. Plays a central role in the generation of purine nucleotides through the purine salvage pathway. The sequence is that of Hypoxanthine-guanine phosphoribosyltransferase (HPRT1) from Bos taurus (Bovine).